Here is a 343-residue protein sequence, read N- to C-terminus: UDP-3-O-acylglucosamine N-acyltransferase (343 aa).

The active-site Proton acceptor is the H237.

The protein belongs to the transferase hexapeptide repeat family. LpxD subfamily. As to quaternary structure, homotrimer.

The catalysed reaction is a UDP-3-O-[(3R)-3-hydroxyacyl]-alpha-D-glucosamine + a (3R)-hydroxyacyl-[ACP] = a UDP-2-N,3-O-bis[(3R)-3-hydroxyacyl]-alpha-D-glucosamine + holo-[ACP] + H(+). It functions in the pathway bacterial outer membrane biogenesis; LPS lipid A biosynthesis. Its function is as follows. Catalyzes the N-acylation of UDP-3-O-acylglucosamine using 3-hydroxyacyl-ACP as the acyl donor. Is involved in the biosynthesis of lipid A, a phosphorylated glycolipid that anchors the lipopolysaccharide to the outer membrane of the cell. In Synechococcus sp. (strain JA-3-3Ab) (Cyanobacteria bacterium Yellowstone A-Prime), this protein is UDP-3-O-acylglucosamine N-acyltransferase.